We begin with the raw amino-acid sequence, 840 residues long: Origin recognition complex subunit 1 (840 aa).

A BAH domain is found at isoleucine 44–glutamate 170. Disordered regions lie at residues valine 195–lysine 218 and phenylalanine 242–glutamine 301. Phosphoserine is present on residues serine 197, serine 255, serine 258, serine 276, serine 291, and serine 332. Acidic residues predominate over residues aspartate 392–phenylalanine 414. Residues aspartate 392 to arginine 456 form a disordered region. Positions leucine 418 to lysine 439 are enriched in polar residues. Residues valine 479 and glycine 513–alanine 521 each bind ATP. A necessary and sufficient for ORC complex assembly region spans residues proline 480–glutamate 840. Mg(2+) contacts are provided by aspartate 599 and glutamate 600. 3 residues coordinate ATP: glutamate 600, asparagine 633, and arginine 699.

It belongs to the ORC1 family. As to quaternary structure, component of ORC, a complex composed of at least 6 subunits: ORC1, ORC2, ORC3, ORC4, ORC5 and ORC6. ORC is regulated in a cell-cycle dependent manner. It is sequentially assembled at the exit from anaphase of mitosis and disassembled as cells enter S phase. Interacts with CDC6 and KAT7/HBO1. Interacts with LRWD1 predominantly during the G1 phase and with less affinity during mitosis, when phosphorylated. Phosphorylated during mitosis.

It localises to the nucleus. Its function is as follows. Component of the origin recognition complex (ORC) that binds origins of replication. DNA-binding is ATP-dependent. The specific DNA sequences that define origins of replication have not been identified yet. ORC is required to assemble the pre-replication complex necessary to initiate DNA replication. In Mus musculus (Mouse), this protein is Origin recognition complex subunit 1 (Orc1).